Here is a 423-residue protein sequence, read N- to C-terminus: Histidine--tRNA ligase (423 aa).

The protein belongs to the class-II aminoacyl-tRNA synthetase family. In terms of assembly, homodimer.

The protein resides in the cytoplasm. The enzyme catalyses tRNA(His) + L-histidine + ATP = L-histidyl-tRNA(His) + AMP + diphosphate + H(+). This chain is Histidine--tRNA ligase, found in Rhodococcus erythropolis (strain PR4 / NBRC 100887).